A 683-amino-acid polypeptide reads, in one-letter code: Methionine--tRNA ligase (683 aa).

Residues Pro15–His25 carry the 'HIGH' region motif. Zn(2+) contacts are provided by Cys146, Cys149, Cys159, and Cys162. A 'KMSKS' region motif is present at residues Lys332–Ser336. Residue Lys335 coordinates ATP. Residues Asp582–Met683 enclose the tRNA-binding domain.

It belongs to the class-I aminoacyl-tRNA synthetase family. MetG type 1 subfamily. Homodimer. Zn(2+) serves as cofactor.

Its subcellular location is the cytoplasm. The catalysed reaction is tRNA(Met) + L-methionine + ATP = L-methionyl-tRNA(Met) + AMP + diphosphate. Its function is as follows. Is required not only for elongation of protein synthesis but also for the initiation of all mRNA translation through initiator tRNA(fMet) aminoacylation. The chain is Methionine--tRNA ligase from Vibrio cholerae serotype O1 (strain ATCC 39315 / El Tor Inaba N16961).